The chain runs to 775 residues: MIDSISEETLIVKSYTVNHCAKNVPVFINSYDLTAEVAKNEDVRLARQVQISLEKIDEVIESIFSASGPSVENVKDQAKFALCRLLLGPVSIPCYCEEWDVNFYLTKCSYNCEGPVLYIYKNASQCCESTYRFSIMTNYHSTHIFRGLLSLQEWNSHLSNILCTCSNVTGDKYTATIFPNNASIYLEYYPYFLCYLCKHLSIIDIEQCTNELIAFLGPKTSQRIIIHYKLLFGFRSKPMNFTVSLLEQVFTLEIQKLYYSVSKHNSTTADFFNVITAKFAEDKYFVLRTFKLSAQITPGIQSFCSLKFKLQTLYLNLKIMKNTKLSISNSFYHGKTLYTLDEKQLVWRNLLLIYYGYNLKDNVKQTQEESLLSMHYIRILERLSLKSFREINQQFSFEIPSYQEKTLQFIPGGNDFAEITSVTHGETTVNAFNTNRVMNVKAALSGEIHCVLHRIPKSMTHSFVMYKRTFKEPSLTVSTFISNDDFTTSSLNINIRGPYCDFLYALGVYRLHVNIQDFFLPAFVCNSNNSMDLHGLENQGIVRKRKKKVYWITNFPCMISNSEKVNVGWFKAGTGIIPKVSGTDLKNVLLKELISIGEIPNITFDMDLHALLTLLEKRNMHQVPFLIKQFFMFLRLGLLVGYGRKQERKVHHIMLFLIQKGFFDFSKNSVANSKIKHACALVGSRLANNVPKILSKQKKMKLDHLGRNANALTVLRFIVENGYYKRKTIFRKLLKYLATTSFNAHVQTESNRLLNLMHNDSKTNFSSLERLYTLR.

This sequence belongs to the herpesviridae UL87 family.

This chain is Protein U58 (U58), found in Homo sapiens (Human).